The primary structure comprises 378 residues: Transaldolase 1 (378 aa).

Lys146 serves as the catalytic Schiff-base intermediate with substrate.

The protein belongs to the transaldolase family. Type 2 subfamily.

It localises to the cytoplasm. The enzyme catalyses D-sedoheptulose 7-phosphate + D-glyceraldehyde 3-phosphate = D-erythrose 4-phosphate + beta-D-fructose 6-phosphate. Its pathway is carbohydrate degradation; pentose phosphate pathway; D-glyceraldehyde 3-phosphate and beta-D-fructose 6-phosphate from D-ribose 5-phosphate and D-xylulose 5-phosphate (non-oxidative stage): step 2/3. Its function is as follows. Transaldolase is important for the balance of metabolites in the pentose-phosphate pathway. This Streptomyces avermitilis (strain ATCC 31267 / DSM 46492 / JCM 5070 / NBRC 14893 / NCIMB 12804 / NRRL 8165 / MA-4680) protein is Transaldolase 1.